Consider the following 455-residue polypeptide: Ribulose bisphosphate carboxylase large chain (455 aa).

An N6,N6,N6-trimethyllysine modification is found at Lys-5. Asn-114 and Thr-164 together coordinate substrate. Catalysis depends on Lys-166, which acts as the Proton acceptor. Lys-168 lines the substrate pocket. 3 residues coordinate Mg(2+): Lys-192, Asp-194, and Glu-195. Position 192 is an N6-carboxylysine (Lys-192). His-285 functions as the Proton acceptor in the catalytic mechanism. The substrate site is built by Arg-286, His-318, and Ser-370.

This sequence belongs to the RuBisCO large chain family. Type I subfamily. As to quaternary structure, heterohexadecamer of 8 large chains and 8 small chains; disulfide-linked. The disulfide link is formed within the large subunit homodimers. Mg(2+) is required as a cofactor. In terms of processing, the disulfide bond which can form in the large chain dimeric partners within the hexadecamer appears to be associated with oxidative stress and protein turnover.

The protein localises to the plastid. It localises to the chloroplast. It carries out the reaction 2 (2R)-3-phosphoglycerate + 2 H(+) = D-ribulose 1,5-bisphosphate + CO2 + H2O. It catalyses the reaction D-ribulose 1,5-bisphosphate + O2 = 2-phosphoglycolate + (2R)-3-phosphoglycerate + 2 H(+). In terms of biological role, ruBisCO catalyzes two reactions: the carboxylation of D-ribulose 1,5-bisphosphate, the primary event in carbon dioxide fixation, as well as the oxidative fragmentation of the pentose substrate in the photorespiration process. Both reactions occur simultaneously and in competition at the same active site. The protein is Ribulose bisphosphate carboxylase large chain of Lupinus arcticus (Arctic lupine).